We begin with the raw amino-acid sequence, 352 residues long: PhoH-like protein (352 aa).

A disordered region spans residues Met1–Val21. Positions Ala9–Gln20 are enriched in low complexity. Residue Gly150–Thr157 coordinates ATP.

Belongs to the PhoH family.

The protein localises to the cytoplasm. This chain is PhoH-like protein, found in Mycobacterium bovis (strain ATCC BAA-935 / AF2122/97).